The chain runs to 273 residues: 4-diphosphocytidyl-2-C-methyl-D-erythritol kinase (273 aa).

Residue Lys-12 is part of the active site. 90 to 100 (PVASGIGGGSA) contacts ATP. Residue Asp-122 is part of the active site.

The protein belongs to the GHMP kinase family. IspE subfamily.

It carries out the reaction 4-CDP-2-C-methyl-D-erythritol + ATP = 4-CDP-2-C-methyl-D-erythritol 2-phosphate + ADP + H(+). It participates in isoprenoid biosynthesis; isopentenyl diphosphate biosynthesis via DXP pathway; isopentenyl diphosphate from 1-deoxy-D-xylulose 5-phosphate: step 3/6. Catalyzes the phosphorylation of the position 2 hydroxy group of 4-diphosphocytidyl-2C-methyl-D-erythritol. The protein is 4-diphosphocytidyl-2-C-methyl-D-erythritol kinase of Paracoccus denitrificans (strain Pd 1222).